The chain runs to 380 residues: Chaperone protein DnaJ (380 aa).

A J domain is found at 5-70 (DFYDVLGVNR…QKRAAYDQYG (66 aa)). The CR-type zinc finger occupies 139 to 217 (GCEKQIRIPT…CHGAGRVKSQ (79 aa)). The Zn(2+) site is built by cysteine 152, cysteine 155, cysteine 169, cysteine 172, cysteine 191, cysteine 194, cysteine 205, and cysteine 208. CXXCXGXG motif repeat units lie at residues 152 to 159 (CSHCHGSG), 169 to 176 (CPTCGGAG), 191 to 198 (CPTCHGSG), and 205 to 212 (CNICHGAG).

Belongs to the DnaJ family. As to quaternary structure, homodimer. Zn(2+) is required as a cofactor.

The protein localises to the cytoplasm. Its function is as follows. Participates actively in the response to hyperosmotic and heat shock by preventing the aggregation of stress-denatured proteins and by disaggregating proteins, also in an autonomous, DnaK-independent fashion. Unfolded proteins bind initially to DnaJ; upon interaction with the DnaJ-bound protein, DnaK hydrolyzes its bound ATP, resulting in the formation of a stable complex. GrpE releases ADP from DnaK; ATP binding to DnaK triggers the release of the substrate protein, thus completing the reaction cycle. Several rounds of ATP-dependent interactions between DnaJ, DnaK and GrpE are required for fully efficient folding. Also involved, together with DnaK and GrpE, in the DNA replication of plasmids through activation of initiation proteins. In Laribacter hongkongensis (strain HLHK9), this protein is Chaperone protein DnaJ.